Reading from the N-terminus, the 330-residue chain is L-asparaginase (330 aa).

An Asparaginase/glutaminase domain is found at 4–330 (PQVTILATGG…EAIQKIFSTY (327 aa)). T14 functions as the O-isoaspartyl threonine intermediate in the catalytic mechanism. Residue 93–94 (TD) participates in substrate binding.

It belongs to the asparaginase 1 family. As to quaternary structure, homotetramer.

It localises to the cytoplasm. It catalyses the reaction L-asparagine + H2O = L-aspartate + NH4(+). The protein is L-asparaginase (ansA) of Wolinella succinogenes (strain ATCC 29543 / DSM 1740 / CCUG 13145 / JCM 31913 / LMG 7466 / NCTC 11488 / FDC 602W) (Vibrio succinogenes).